Reading from the N-terminus, the 144-residue chain is Transcription antitermination protein NusB (144 aa).

It belongs to the NusB family.

Functionally, involved in transcription antitermination. Required for transcription of ribosomal RNA (rRNA) genes. Binds specifically to the boxA antiterminator sequence of the ribosomal RNA (rrn) operons. The chain is Transcription antitermination protein NusB from Blochmanniella pennsylvanica (strain BPEN).